Reading from the N-terminus, the 427-residue chain is Glutamate-1-semialdehyde 2,1-aminomutase (427 aa).

Lysine 265 bears the N6-(pyridoxal phosphate)lysine mark.

It belongs to the class-III pyridoxal-phosphate-dependent aminotransferase family. HemL subfamily. Homodimer. Pyridoxal 5'-phosphate serves as cofactor.

The protein resides in the cytoplasm. The enzyme catalyses (S)-4-amino-5-oxopentanoate = 5-aminolevulinate. The protein operates within porphyrin-containing compound metabolism; protoporphyrin-IX biosynthesis; 5-aminolevulinate from L-glutamyl-tRNA(Glu): step 2/2. The chain is Glutamate-1-semialdehyde 2,1-aminomutase from Stutzerimonas stutzeri (strain A1501) (Pseudomonas stutzeri).